We begin with the raw amino-acid sequence, 454 residues long: NADH-quinone oxidoreductase subunit H (454 aa).

9 consecutive transmembrane segments (helical) span residues 18 to 38 (WWLVVVKAVFCFAFLMITVLF), 88 to 108 (VVYVLAPIVAAIPAFMAIAVI), 131 to 151 (LPIAMLYILAVASVGIYGIVL), 172 to 192 (MISYEIAMGAAFASVFLYSGS), 206 to 226 (WYIVLLPVSFVIYIVTMVGET), 256 to 276 (FMLAEYVNMVTVSAVSTTLFL), 296 to 316 (WWPMLWFVVKVQLLLFFFIWL), 328 to 348 (LMKLGWKVLIPVSVVWLMLVA), and 360 to 380 (FADIALYVGGGVLVLLLLSFV). A disordered region spans residues 395–454 (AEEPAAFDPMAGGFPVPPLPGQTLPPVPRRRPRRDRELIVSGGPDTASDGPANGKEASDG). Pro residues predominate over residues 409–421 (PVPPLPGQTLPPV).

The protein belongs to the complex I subunit 1 family. In terms of assembly, NDH-1 is composed of 14 different subunits. Subunits NuoA, H, J, K, L, M, N constitute the membrane sector of the complex.

It is found in the cell membrane. It carries out the reaction a quinone + NADH + 5 H(+)(in) = a quinol + NAD(+) + 4 H(+)(out). Functionally, NDH-1 shuttles electrons from NADH, via FMN and iron-sulfur (Fe-S) centers, to quinones in the respiratory chain. The immediate electron acceptor for the enzyme in this species is believed to be ubiquinone. Couples the redox reaction to proton translocation (for every two electrons transferred, four hydrogen ions are translocated across the cytoplasmic membrane), and thus conserves the redox energy in a proton gradient. This subunit may bind ubiquinone. The chain is NADH-quinone oxidoreductase subunit H from Streptomyces avermitilis (strain ATCC 31267 / DSM 46492 / JCM 5070 / NBRC 14893 / NCIMB 12804 / NRRL 8165 / MA-4680).